Here is a 178-residue protein sequence, read N- to C-terminus: MDFLNMSYQLIVAYLIQLGIYIGALAVIFFNNIVYAAISLALVLSLIALLYLFFDADFLAVTQILIYVGAINVLILFAIMLISLPKSSTFIFYFTKKSQISAFACISLFVLLVKIILQTPWSTQSSYILLNENNKLDQIGIYLLSNFLLPFELISLLLLIALIGAVSIARYQNTEETE.

Transmembrane regions (helical) follow at residues 10-30, 33-53, 64-84, 100-120, and 148-168; these read LIVA…VIFF, IVYA…LYLF, ILIY…LISL, ISAF…LQTP, and LLPF…AVSI.

The protein belongs to the complex I subunit 6 family. In terms of assembly, NDH is composed of at least 16 different subunits, 5 of which are encoded in the nucleus.

It localises to the plastid. The protein resides in the chloroplast thylakoid membrane. It carries out the reaction a plastoquinone + NADH + (n+1) H(+)(in) = a plastoquinol + NAD(+) + n H(+)(out). The enzyme catalyses a plastoquinone + NADPH + (n+1) H(+)(in) = a plastoquinol + NADP(+) + n H(+)(out). Functionally, NDH shuttles electrons from NAD(P)H:plastoquinone, via FMN and iron-sulfur (Fe-S) centers, to quinones in the photosynthetic chain and possibly in a chloroplast respiratory chain. The immediate electron acceptor for the enzyme in this species is believed to be plastoquinone. Couples the redox reaction to proton translocation, and thus conserves the redox energy in a proton gradient. This Chara vulgaris (Common stonewort) protein is NAD(P)H-quinone oxidoreductase subunit 6, chloroplastic (ndhG).